We begin with the raw amino-acid sequence, 319 residues long: MKRIGVLTSGGDSPGMNAAVRAVVRKAIYHDVEVYGIYNGYSGLISGKIEKLEIGSVGDIIHRGGTKLYTARCPEFKTVEGREKGIANLKKYGIEGLVVIGGDGSYMGAKKLTEHGFPCVGVPGTIDNDIPGTDLTIGFDTALNTVIDAIDKIRDTATSHERTYVIEVMGRHAGDIALWSGLAGGAESILIPEADYDMEEIIARLKRGHERGKKHSIIIVAEGVGSGVEFGKRIEEATNLETRVSVLGHIQRGGSPTAADRVLASRLGAFAVELLLEGKGGRCVGIQNNQLVHHDIIEILEQKHTIDQSMYRLSQELSI.

Residue Gly-11 coordinates ATP. 21-25 (RAVVR) contacts ADP. Residues 72 to 73 (RC) and 102 to 105 (GDGS) each bind ATP. Residue Asp-103 participates in Mg(2+) binding. 125 to 127 (TID) is a binding site for substrate. Asp-127 (proton acceptor) is an active-site residue. Residue Arg-154 coordinates ADP. Residues Arg-162 and 169-171 (MGR) contribute to the substrate site. Residues 185–187 (GAE), Arg-211, and 213–215 (KKH) contribute to the ADP site. Substrate contacts are provided by residues Glu-222, Arg-243, and 249-252 (HIQR).

It belongs to the phosphofructokinase type A (PFKA) family. ATP-dependent PFK group I subfamily. Prokaryotic clade 'B1' sub-subfamily. As to quaternary structure, homotetramer. It depends on Mg(2+) as a cofactor.

Its subcellular location is the cytoplasm. The catalysed reaction is beta-D-fructose 6-phosphate + ATP = beta-D-fructose 1,6-bisphosphate + ADP + H(+). The protein operates within carbohydrate degradation; glycolysis; D-glyceraldehyde 3-phosphate and glycerone phosphate from D-glucose: step 3/4. Its activity is regulated as follows. Allosterically activated by ADP and other diphosphonucleosides, and allosterically inhibited by phosphoenolpyruvate. Catalyzes the phosphorylation of D-fructose 6-phosphate to fructose 1,6-bisphosphate by ATP, the first committing step of glycolysis. The protein is ATP-dependent 6-phosphofructokinase of Bacillus licheniformis (strain ATCC 14580 / DSM 13 / JCM 2505 / CCUG 7422 / NBRC 12200 / NCIMB 9375 / NCTC 10341 / NRRL NRS-1264 / Gibson 46).